Consider the following 20-residue polypeptide: Large ribosomal subunit protein uL5 (20 aa).

The protein belongs to the universal ribosomal protein uL5 family. As to quaternary structure, part of the 50S ribosomal subunit; part of the 5S rRNA/L5/L18/L25 subcomplex. Contacts the 5S rRNA and the P site tRNA. Forms a bridge to the 30S subunit in the 70S ribosome.

This is one of the proteins that bind and probably mediate the attachment of the 5S RNA into the large ribosomal subunit, where it forms part of the central protuberance. In the 70S ribosome it contacts protein S13 of the 30S subunit (bridge B1b), connecting the two subunits; this bridge is implicated in subunit movement. Contacts the P site tRNA; the 5S rRNA and some of its associated proteins might help stabilize positioning of ribosome-bound tRNAs. The polypeptide is Large ribosomal subunit protein uL5 (rplE) (Bacillus cereus).